The sequence spans 141 residues: Auxin-responsive protein SAUR62 (141 aa).

The protein belongs to the ARG7 family. Expressed in stamen filaments and petals.

It is found in the cell membrane. Its function is as follows. May promote auxin-stimulated organ elongation, such as hypocotyls, stamen filaments and petals. The protein is Auxin-responsive protein SAUR62 of Arabidopsis thaliana (Mouse-ear cress).